We begin with the raw amino-acid sequence, 362 residues long: Serine/threonine-protein kinase-like protein At3g51990 (362 aa).

The N-terminal stretch at Met-1 to Gly-24 is a signal peptide. A compositionally biased stretch (low complexity) spans Ser-21–Ala-32. The interval Ser-21–Arg-43 is disordered. The 271-residue stretch at Phe-59–Leu-329 folds into the Protein kinase domain. ATP is bound by residues Leu-65–Val-73 and Lys-86. N-linked (GlcNAc...) asparagine glycosylation is present at Asn-136. The active-site Proton acceptor is Asp-185. Phosphoserine is present on Ser-219. 2 positions are modified to phosphothreonine: Thr-220 and Thr-225. Tyr-233 is modified (phosphotyrosine).

Belongs to the protein kinase superfamily. Ser/Thr protein kinase family.

It is found in the secreted. The enzyme catalyses L-seryl-[protein] + ATP = O-phospho-L-seryl-[protein] + ADP + H(+). The catalysed reaction is L-threonyl-[protein] + ATP = O-phospho-L-threonyl-[protein] + ADP + H(+). The protein is Serine/threonine-protein kinase-like protein At3g51990 of Arabidopsis thaliana (Mouse-ear cress).